A 425-amino-acid polypeptide reads, in one-letter code: Glutamate-1-semialdehyde 2,1-aminomutase (425 aa).

Lysine 265 carries the N6-(pyridoxal phosphate)lysine modification.

The protein belongs to the class-III pyridoxal-phosphate-dependent aminotransferase family. HemL subfamily. In terms of assembly, homodimer. The cofactor is pyridoxal 5'-phosphate.

It is found in the cytoplasm. It carries out the reaction (S)-4-amino-5-oxopentanoate = 5-aminolevulinate. The protein operates within porphyrin-containing compound metabolism; protoporphyrin-IX biosynthesis; 5-aminolevulinate from L-glutamyl-tRNA(Glu): step 2/2. This Opitutus terrae (strain DSM 11246 / JCM 15787 / PB90-1) protein is Glutamate-1-semialdehyde 2,1-aminomutase.